The primary structure comprises 244 residues: Phosphoadenosine 5'-phosphosulfate reductase (244 aa).

Catalysis depends on C239, which acts as the Nucleophile; cysteine thiosulfonate intermediate.

It belongs to the PAPS reductase family. CysH subfamily.

It localises to the cytoplasm. The enzyme catalyses [thioredoxin]-disulfide + sulfite + adenosine 3',5'-bisphosphate + 2 H(+) = [thioredoxin]-dithiol + 3'-phosphoadenylyl sulfate. Its pathway is sulfur metabolism; hydrogen sulfide biosynthesis; sulfite from sulfate: step 3/3. In terms of biological role, catalyzes the formation of sulfite from phosphoadenosine 5'-phosphosulfate (PAPS) using thioredoxin as an electron donor. This Escherichia coli O8 (strain IAI1) protein is Phosphoadenosine 5'-phosphosulfate reductase.